Reading from the N-terminus, the 572-residue chain is Squalene synthase (572 aa).

Helical transmembrane passes span 316–336 (SVFN…ELMF) and 492–512 (FFLI…LITW).

The protein belongs to the phytoene/squalene synthase family. As to quaternary structure, monomer. The cofactor is Mg(2+).

It is found in the endoplasmic reticulum membrane. The enzyme catalyses 2 (2E,6E)-farnesyl diphosphate + NADPH + H(+) = squalene + 2 diphosphate + NADP(+). It carries out the reaction 2 (2E,6E)-farnesyl diphosphate + NADH + H(+) = squalene + 2 diphosphate + NAD(+). It functions in the pathway terpene metabolism; lanosterol biosynthesis; lanosterol from farnesyl diphosphate: step 1/3. Its function is as follows. Catalyzes the condensation of 2 two farnesyl pyrophosphate moieties to form squalene. It is the first committed enzyme of the sterol biosynthesis pathway. Required for the biosynthesis of ergosterol. In Mycosarcoma maydis (Corn smut fungus), this protein is Squalene synthase (ERG9).